The following is a 172-amino-acid chain: Spermidine/spermine N(1)-acetyltransferase (172 aa).

One can recognise an N-acetyltransferase domain in the interval 3–172 (VKMKKCSRED…TDLIMAKTLI (170 aa)). Acetyl-CoA contacts are provided by residues 96-98 (IYI), 105-109 (HGLGK), and 135-137 (NEN). The Proton donor role is filled by Tyr142. Residue Lys144 participates in acetyl-CoA binding.

It belongs to the acetyltransferase family. As to quaternary structure, monomer.

It catalyses the reaction an alkane-alpha,omega-diamine + acetyl-CoA = an N-acetylalkane-alpha,omega-diamine + CoA + H(+). Its function is as follows. Involved in the protection against polyamine toxicity by regulating their concentration. Could also be involved in the negative control of sporulation as well as production of degradative enzymes such as alpha-amylase, levansucrase and alkaline phosphatase. Catalyzes the transfer of an acetyl group from acetyl coenzyme A (AcCoA) to an acceptor substrate and releases both CoA and the acetylated product. It possesses N1-acetyltransferase activity toward polyamine substrates including spermidine, spermine, aminopropylcadaverine, norspermidine, homospermidine, N(8)-acetylspermidine, diaminopropane and agmatine. The sequence is that of Spermidine/spermine N(1)-acetyltransferase from Bacillus subtilis (strain 168).